The following is a 177-amino-acid chain: uncharacterized protein (177 aa).

The protein to B.subtilis YutG.

This is an uncharacterized protein from Bacillus subtilis (strain 168).